A 249-amino-acid chain; its full sequence is Transcriptional activator protein EsaR (249 aa).

Residues 174 to 239 form the HTH luxR-type domain; that stretch reads QSADKTIFSS…QAIRLGVELD (66 aa). Positions 198 to 217 form a DNA-binding region, H-T-H motif; sequence YAEIAAITGISVSTVKFHIK.

Belongs to the autoinducer-regulated transcriptional regulatory protein family.

Functionally, functions as a potential OhlL-responsive transcriptional regulator. The polypeptide is Transcriptional activator protein EsaR (esaR) (Pantoea stewartii subsp. stewartii (Erwinia stewartii)).